The primary structure comprises 468 residues: uncharacterized protein (468 aa).

One can recognise a TRAM domain in the interval Thr-3 to Ala-61. The [4Fe-4S] cluster site is built by Cys-74, Cys-80, Cys-83, and Cys-162. S-adenosyl-L-methionine is bound by residues Gln-288, Tyr-317, Glu-338, and Asp-389. The active-site Nucleophile is the Cys-416.

This sequence belongs to the class I-like SAM-binding methyltransferase superfamily. RNA M5U methyltransferase family.

This is an uncharacterized protein from Nitratidesulfovibrio vulgaris (strain ATCC 29579 / DSM 644 / CCUG 34227 / NCIMB 8303 / VKM B-1760 / Hildenborough) (Desulfovibrio vulgaris).